The sequence spans 250 residues: 3-deoxy-manno-octulosonate cytidylyltransferase (250 aa).

The protein belongs to the KdsB family.

Its subcellular location is the cytoplasm. It carries out the reaction 3-deoxy-alpha-D-manno-oct-2-ulosonate + CTP = CMP-3-deoxy-beta-D-manno-octulosonate + diphosphate. Its pathway is nucleotide-sugar biosynthesis; CMP-3-deoxy-D-manno-octulosonate biosynthesis; CMP-3-deoxy-D-manno-octulosonate from 3-deoxy-D-manno-octulosonate and CTP: step 1/1. It participates in bacterial outer membrane biogenesis; lipopolysaccharide biosynthesis. Activates KDO (a required 8-carbon sugar) for incorporation into bacterial lipopolysaccharide in Gram-negative bacteria. This Francisella tularensis subsp. holarctica (strain FTNF002-00 / FTA) protein is 3-deoxy-manno-octulosonate cytidylyltransferase.